Reading from the N-terminus, the 548-residue chain is Lysine--tRNA ligase (548 aa).

Positions 43-51 match the 'HIGH' region motif; the sequence is PSGVPHLGN. The short motif at 308-312 is the 'KMSKS' region element; the sequence is PFSSS.

Belongs to the class-I aminoacyl-tRNA synthetase family.

Its subcellular location is the cytoplasm. It catalyses the reaction tRNA(Lys) + L-lysine + ATP = L-lysyl-tRNA(Lys) + AMP + diphosphate. The chain is Lysine--tRNA ligase from Halobacterium salinarum (strain ATCC 700922 / JCM 11081 / NRC-1) (Halobacterium halobium).